The sequence spans 142 residues: Small heat shock protein IbpB (142 aa).

A sHSP domain is found at 26-137; that stretch reads TGESQSFPPY…APQRIAISER (112 aa).

This sequence belongs to the small heat shock protein (HSP20) family. In terms of assembly, homodimer. Forms homomultimers of about 100-150 subunits at optimal growth temperatures. Conformation changes to oligomers at high temperatures or high ionic concentrations. The decrease in size of the multimers is accompanied by an increase in chaperone activity.

Its subcellular location is the cytoplasm. In terms of biological role, associates with aggregated proteins, together with IbpA, to stabilize and protect them from irreversible denaturation and extensive proteolysis during heat shock and oxidative stress. Aggregated proteins bound to the IbpAB complex are more efficiently refolded and reactivated by the ATP-dependent chaperone systems ClpB and DnaK/DnaJ/GrpE. Its activity is ATP-independent. The sequence is that of Small heat shock protein IbpB from Citrobacter koseri (strain ATCC BAA-895 / CDC 4225-83 / SGSC4696).